The chain runs to 276 residues: Chymotrypsin (276 aa).

An N-terminal signal peptide occupies residues 1–16; that stretch reads MKVALVVLALFGVSLA. Positions 17–45 are cleaved as a propeptide — activation peptide; that stretch reads ASIDNIEIPPSKNIYVEPINQPEVDPSLE. Residues 46 to 272 enclose the Peptidase S1 domain; it reads IVNGQEVVPH…YLNWLQTHSE (227 aa). A disulfide bridge connects residues Cys74 and Cys90. Catalysis depends on charge relay system residues His89 and Asp135. N-linked (GlcNAc...) asparagine glycans are attached at residues Asn144 and Asn193. 2 disulfide bridges follow: Cys202/Cys215 and Cys225/Cys250. Ser229 functions as the Charge relay system in the catalytic mechanism.

Belongs to the peptidase S1 family. In terms of tissue distribution, expressed in larval carcasses and gut, and adult gut.

The protein resides in the secreted. It is found in the extracellular space. The catalysed reaction is Preferential cleavage: Tyr-|-Xaa, Trp-|-Xaa, Phe-|-Xaa, Leu-|-Xaa.. Its function is as follows. Serine protease with chymotryptic and collagenolytic activities. The sequence is that of Chymotrypsin from Phaedon cochleariae (Mustard beetle).